A 304-amino-acid polypeptide reads, in one-letter code: GTPase Era (304 aa).

Positions 9–176 (KSGFVSIIGR…LLEITKHLSE (168 aa)) constitute an Era-type G domain. Residues 17–24 (GRPNVGKS) form a G1 region. 17-24 (GRPNVGKS) is a GTP binding site. A G2 region spans residues 43 to 47 (QTTRN). Residues 64 to 67 (DTPG) form a G3 region. GTP contacts are provided by residues 64–68 (DTPGI) and 126–129 (NKID). Positions 126-129 (NKID) are G4. A G5 region spans residues 155–157 (VSA). One can recognise a KH type-2 domain in the interval 199-285 (IREKVLHLTR…FLELWVKVQK (87 aa)).

This sequence belongs to the TRAFAC class TrmE-Era-EngA-EngB-Septin-like GTPase superfamily. Era GTPase family. In terms of assembly, monomer.

It localises to the cytoplasm. The protein localises to the cell membrane. An essential GTPase that binds both GDP and GTP, with rapid nucleotide exchange. Plays a role in 16S rRNA processing and 30S ribosomal subunit biogenesis and possibly also in cell cycle regulation and energy metabolism. This is GTPase Era from Halalkalibacterium halodurans (strain ATCC BAA-125 / DSM 18197 / FERM 7344 / JCM 9153 / C-125) (Bacillus halodurans).